We begin with the raw amino-acid sequence, 56 residues long: Protein p56 (56 aa).

The protein belongs to the phi29likevirus protein p56 family. As to quaternary structure, homodimer. Interacts with host UDG; this interaction inhibits the uracil-DNA glycosylase.

In terms of biological role, inhibits the host uracil-DNA glycosylase (UDG), an enzyme which removes uracil residues from DNA by the base excision repair. Interacts with host uracil-DNA glycosylase and prevents the latter from binding to DNA. Since the viral DNA polymerase efficiently incorporates dUMP into DNA, the virus needs to prevent the deleterious effect caused by host UDG when it eliminates uracil residues present in the viral genome. In Bacillus phage PZA (Bacteriophage PZA), this protein is Protein p56 (1B).